Consider the following 429-residue polypeptide: Phosphomethylpyrimidine synthase 1 (429 aa).

Residues N65, M94, Y123, H162, 184–186 (SRG), 225–228 (DGLR), and E264 each bind substrate. H268 lines the Zn(2+) pocket. Residue Y291 coordinates substrate. Position 332 (H332) interacts with Zn(2+). C408, C411, and C415 together coordinate [4Fe-4S] cluster.

The protein belongs to the ThiC family. The cofactor is [4Fe-4S] cluster.

The catalysed reaction is 5-amino-1-(5-phospho-beta-D-ribosyl)imidazole + S-adenosyl-L-methionine = 4-amino-2-methyl-5-(phosphooxymethyl)pyrimidine + CO + 5'-deoxyadenosine + formate + L-methionine + 3 H(+). The protein operates within cofactor biosynthesis; thiamine diphosphate biosynthesis. Functionally, catalyzes the synthesis of the hydroxymethylpyrimidine phosphate (HMP-P) moiety of thiamine from aminoimidazole ribotide (AIR) in a radical S-adenosyl-L-methionine (SAM)-dependent reaction. This chain is Phosphomethylpyrimidine synthase 1, found in Methanosphaera stadtmanae (strain ATCC 43021 / DSM 3091 / JCM 11832 / MCB-3).